Consider the following 468-residue polypeptide: RUS family member 1 (468 aa).

Position 2 is an N-acetylalanine (Ala2). A Phosphothreonine modification is found at Thr49. Residues 247–267 (LLMLPLVSGCPGFSLGCFFFL) form a helical membrane-spanning segment.

Belongs to the RUS1 family.

The protein resides in the membrane. The chain is RUS family member 1 from Homo sapiens (Human).